We begin with the raw amino-acid sequence, 506 residues long: Bifunctional purine biosynthesis protein PurH (506 aa).

Residues 1 to 146 (MARLALLSVS…KNFAHLTVLC (146 aa)) enclose the MGS-like domain.

The protein belongs to the PurH family.

It catalyses the reaction (6R)-10-formyltetrahydrofolate + 5-amino-1-(5-phospho-beta-D-ribosyl)imidazole-4-carboxamide = 5-formamido-1-(5-phospho-D-ribosyl)imidazole-4-carboxamide + (6S)-5,6,7,8-tetrahydrofolate. It carries out the reaction IMP + H2O = 5-formamido-1-(5-phospho-D-ribosyl)imidazole-4-carboxamide. The protein operates within purine metabolism; IMP biosynthesis via de novo pathway; 5-formamido-1-(5-phospho-D-ribosyl)imidazole-4-carboxamide from 5-amino-1-(5-phospho-D-ribosyl)imidazole-4-carboxamide (10-formyl THF route): step 1/1. Its pathway is purine metabolism; IMP biosynthesis via de novo pathway; IMP from 5-formamido-1-(5-phospho-D-ribosyl)imidazole-4-carboxamide: step 1/1. In Nostoc sp. (strain PCC 7120 / SAG 25.82 / UTEX 2576), this protein is Bifunctional purine biosynthesis protein PurH.